We begin with the raw amino-acid sequence, 331 residues long: NADH-quinone oxidoreductase subunit H (331 aa).

A run of 9 helical transmembrane segments spans residues 6–26, 45–65, 78–98, 120–140, 167–187, 193–213, 241–261, 263–283, and 311–331; these read FFIV…ATLA, GPWM…IKLF, FIFL…MSVI, IGIL…LIGG, GLSL…DIVH, ITSW…IAAF, MRWG…SIVI, LIFL…MIFL, and CWKI…FVII.

The protein belongs to the complex I subunit 1 family. In terms of assembly, NDH-1 is composed of 14 different subunits. Subunits NuoA, H, J, K, L, M, N constitute the membrane sector of the complex.

The protein localises to the cell inner membrane. It carries out the reaction a quinone + NADH + 5 H(+)(in) = a quinol + NAD(+) + 4 H(+)(out). In terms of biological role, NDH-1 shuttles electrons from NADH, via FMN and iron-sulfur (Fe-S) centers, to quinones in the respiratory chain. The immediate electron acceptor for the enzyme in this species is believed to be ubiquinone. Couples the redox reaction to proton translocation (for every two electrons transferred, four hydrogen ions are translocated across the cytoplasmic membrane), and thus conserves the redox energy in a proton gradient. This subunit may bind ubiquinone. This is NADH-quinone oxidoreductase subunit H from Campylobacter hominis (strain ATCC BAA-381 / DSM 21671 / CCUG 45161 / LMG 19568 / NCTC 13146 / CH001A).